The chain runs to 416 residues: UDP-N-acetylmuramoylalanine--D-glutamate ligase (416 aa).

Residue 108–114 (GTTGKTT) participates in ATP binding.

The protein belongs to the MurCDEF family.

Its subcellular location is the cytoplasm. It catalyses the reaction UDP-N-acetyl-alpha-D-muramoyl-L-alanine + D-glutamate + ATP = UDP-N-acetyl-alpha-D-muramoyl-L-alanyl-D-glutamate + ADP + phosphate + H(+). The protein operates within cell wall biogenesis; peptidoglycan biosynthesis. In terms of biological role, cell wall formation. Catalyzes the addition of glutamate to the nucleotide precursor UDP-N-acetylmuramoyl-L-alanine (UMA). In Chlamydia trachomatis serovar A (strain ATCC VR-571B / DSM 19440 / HAR-13), this protein is UDP-N-acetylmuramoylalanine--D-glutamate ligase.